Reading from the N-terminus, the 111-residue chain is uncharacterized protein (111 aa).

Residues 18–41 (FFYFFFISFYTLWIVFFLLHLSFF) traverse the membrane as a helical segment.

The protein resides in the membrane. This is an uncharacterized protein from Saccharomyces cerevisiae (strain ATCC 204508 / S288c) (Baker's yeast).